An 820-amino-acid polypeptide reads, in one-letter code: Cell division control protein 48 homolog C (820 aa).

2 disordered regions span residues 72–157 (RVKD…RFDL) and 169–188 (LNSS…VEVE). Residues 76–87 (EDEDDNIGDEEG) show a composition bias toward acidic residues. Residues 85–122 (EEGSASQRKKQRRVDEKEEKLQRAEQSHLRKRNMERSV) adopt a coiled-coil conformation. A compositionally biased stretch (basic and acidic residues) spans 97 to 119 (RVDEKEEKLQRAEQSHLRKRNME). Low complexity predominate over residues 121 to 142 (SVSSSPSSSSSSEDSGDVSTSE). ATP is bound by residues 274–281 (GPPGCGKT) and 569–576 (GPPGCGKT).

The protein belongs to the AAA ATPase family.

It localises to the nucleus. The protein localises to the cytoplasm. Its subcellular location is the cytoskeleton. It is found in the phragmoplast. Probably functions in cell division and growth processes. Interacts with certain SNAREs as part of specialized membrane fusion events where vesicles from the same organelle fuse (homotypic fusion). This Arabidopsis thaliana (Mouse-ear cress) protein is Cell division control protein 48 homolog C (CDC48C).